Consider the following 296-residue polypeptide: D-alanine--D-alanine ligase (296 aa).

An ATP-grasp domain is found at 103–293 (KEILMHHRMP…FDSFVKRIIE (191 aa)). Residue 129-180 (ISFPAAVKPSSGGSSIATFKVKSIQELKHAYEEASKYGEVMIEQWVTGKEIT) participates in ATP binding. Residues Asp-247, Glu-260, and Asn-262 each coordinate Mg(2+).

Belongs to the D-alanine--D-alanine ligase family. It depends on Mg(2+) as a cofactor. The cofactor is Mn(2+).

Its subcellular location is the cytoplasm. The enzyme catalyses 2 D-alanine + ATP = D-alanyl-D-alanine + ADP + phosphate + H(+). It participates in cell wall biogenesis; peptidoglycan biosynthesis. Its function is as follows. Cell wall formation. This Francisella tularensis subsp. holarctica (strain LVS) protein is D-alanine--D-alanine ligase.